The sequence spans 269 residues: MNQMNPAFVMPDVQSTVDTRQIPIQRVGVKAVRHPLTVLTESGDVQPTVGVWNLDVRLPAEQKGTHMSRFVALLEENRAPLTIERFRAMIASMLEKLEAEAGRIEVTFPYFVNKTAPVSGVQSLLDYEVTLAGESRNGDTRLFLKVLVPVTSLCPCSKKISQYGAHNQRSHVTIDAELAADVPVEALIRIAEEEASCELWGLLKRPDEKFVTERAYENPKFVEDLVRDVAARLDADARIVAYVLEAENFESIHNHSAYALIERDKRHAA.

Belongs to the GTP cyclohydrolase IV family.

The enzyme catalyses GTP + H2O = 7,8-dihydroneopterin 3'-triphosphate + formate + H(+). Its pathway is cofactor biosynthesis; 7,8-dihydroneopterin triphosphate biosynthesis; 7,8-dihydroneopterin triphosphate from GTP: step 1/1. Functionally, converts GTP to 7,8-dihydroneopterin triphosphate. This is GTP cyclohydrolase FolE2 from Burkholderia multivorans (strain ATCC 17616 / 249).